We begin with the raw amino-acid sequence, 343 residues long: Probable dual-specificity RNA methyltransferase RlmN (343 aa).

The active-site Proton acceptor is Glu-92. The Radical SAM core domain occupies 98–328 (YHHGLTACIS…TTVRREMGAD (231 aa)). An intrachain disulfide couples Cys-105 to Cys-333. Residues Cys-112, Cys-116, and Cys-119 each coordinate [4Fe-4S] cluster. S-adenosyl-L-methionine-binding positions include 159–160 (GE), Ser-191, 214–216 (SLH), and Asn-290. Cys-333 (S-methylcysteine intermediate) is an active-site residue.

This sequence belongs to the radical SAM superfamily. RlmN family. It depends on [4Fe-4S] cluster as a cofactor.

It is found in the cytoplasm. It catalyses the reaction adenosine(2503) in 23S rRNA + 2 reduced [2Fe-2S]-[ferredoxin] + 2 S-adenosyl-L-methionine = 2-methyladenosine(2503) in 23S rRNA + 5'-deoxyadenosine + L-methionine + 2 oxidized [2Fe-2S]-[ferredoxin] + S-adenosyl-L-homocysteine. It carries out the reaction adenosine(37) in tRNA + 2 reduced [2Fe-2S]-[ferredoxin] + 2 S-adenosyl-L-methionine = 2-methyladenosine(37) in tRNA + 5'-deoxyadenosine + L-methionine + 2 oxidized [2Fe-2S]-[ferredoxin] + S-adenosyl-L-homocysteine. Its function is as follows. Specifically methylates position 2 of adenine 2503 in 23S rRNA and position 2 of adenine 37 in tRNAs. This Alkaliphilus oremlandii (strain OhILAs) (Clostridium oremlandii (strain OhILAs)) protein is Probable dual-specificity RNA methyltransferase RlmN.